The sequence spans 334 residues: N-chimaerin (334 aa).

Residues 1–10 (MPSKESWSGR) show a composition bias toward polar residues. Residues 1–22 (MPSKESWSGRKTNRATVHKSKQ) are disordered. A Phosphothreonine modification is found at threonine 67. The segment at 80–130 (VHNFKVHTFRGPHWCEYCANFMWGLIAQGVKCADCGLNVHKQCSKMVPNDC) adopts a Phorbol-ester/DAG-type zinc-finger fold. Positions 143–334 (CDLTTLVKAH…LLIKNEDILF (192 aa)) constitute a Rho-GAP domain. Threonine 215 carries the phosphothreonine modification.

Interacts with EPHA4; effector of EPHA4 in axon guidance linking EPHA4 activation to RAC1 regulation. Post-translationally, phosphorylated. Phosphorylation is EPHA4 kinase activity-dependent. In neurons in brain regions that are involved in learning and memory processes.

Its function is as follows. GTPase-activating protein for p21-rac and a phorbol ester receptor. Involved in the assembly of neuronal locomotor circuits as a direct effector of EPHA4 in axon guidance. This chain is N-chimaerin (Chn1), found in Rattus norvegicus (Rat).